A 280-amino-acid chain; its full sequence is Protein phosphatase 1 regulatory subunit 3B-A (280 aa).

The PP1-binding motif signature appears at 58-61 (RVSF). Residues 121 to 229 (RNRLQADSVC…SNKSLNYKIA (109 aa)) enclose the CBM21 domain.

In terms of assembly, interacts with glycogen, PPP1CC catalytic subunit of PP1 and PYGL. Associates with glycogen particles. Forms complexes with debranching enzyme, glycogen phosphorylase, glycogen synthase and phosphorylase kinase which is necessary for its regulation of PP1 activity.

Its function is as follows. Acts as a glycogen-targeting subunit for phosphatase PP1. Facilitates interaction of the PP1 with enzymes of the glycogen metabolism and regulates its activity. Suppresses the rate at which PP1 dephosphorylates (inactivates) glycogen phosphorylase and enhances the rate at which it activates glycogen synthase and therefore limits glycogen breakdown. The protein is Protein phosphatase 1 regulatory subunit 3B-A (ppp1r3b-a) of Xenopus laevis (African clawed frog).